A 255-amino-acid polypeptide reads, in one-letter code: Pyrroloquinoline-quinone synthase (255 aa).

The protein belongs to the PqqC family.

It carries out the reaction 6-(2-amino-2-carboxyethyl)-7,8-dioxo-1,2,3,4,7,8-hexahydroquinoline-2,4-dicarboxylate + 3 O2 = pyrroloquinoline quinone + 2 H2O2 + 2 H2O + H(+). The protein operates within cofactor biosynthesis; pyrroloquinoline quinone biosynthesis. Functionally, ring cyclization and eight-electron oxidation of 3a-(2-amino-2-carboxyethyl)-4,5-dioxo-4,5,6,7,8,9-hexahydroquinoline-7,9-dicarboxylic-acid to PQQ. The sequence is that of Pyrroloquinoline-quinone synthase from Cereibacter sphaeroides (strain ATCC 17029 / ATH 2.4.9) (Rhodobacter sphaeroides).